A 1322-amino-acid polypeptide reads, in one-letter code: Sal-like protein 1 (1322 aa).

The disordered stretch occupies residues 1 to 41 (MSRRKQAKPQHFQSDPEVASLPRRDGDTEKGQPSRPTKSKD). Residues 22 to 41 (PRRDGDTEKGQPSRPTKSKD) are compositionally biased toward basic and acidic residues. A C2H2-type 1; atypical zinc finger spans residues 43–65 (HVCGRCCAEFFELSDLLLHKKSC). The disordered stretch occupies residues 78 to 128 (PASPAKTFPPGPSLNDPDDQMKDAANKADQEDCSDLSEPKGLDREESMEVE). Basic and acidic residues-rich tracts occupy residues 96 to 107 (DQMKDAANKADQ) and 114 to 124 (SEPKGLDREES). Residue K440 forms a Glycyl lysine isopeptide (Lys-Gly) (interchain with G-Cter in SUMO2) linkage. 2 C2H2-type zinc fingers span residues 450–472 (HKCR…LRSH) and 478–500 (FKCN…FQRH). The tract at residues 578–659 (PIPISHSAAS…GGPGGTTFTN (82 aa)) is disordered. Positions 584–594 (SAASPQGSVKS) are enriched in polar residues. Residues S591, S594, and S596 each carry the phosphoserine modification. The span at 629-645 (NMASSAVPTAGNSTLNS) shows a compositional bias: polar residues. Residues K672, K689, and K700 each participate in a glycyl lysine isopeptide (Lys-Gly) (interchain with G-Cter in SUMO2) cross-link. 3 consecutive C2H2-type zinc fingers follow at residues 705 to 727 (NECI…YRTH), 733 to 755 (FKCK…YSVH), and 765 to 787 (HSCP…IRMH). Disordered regions lie at residues 789–855 (GGQI…SSPL) and 891–961 (SMEG…GLSP). Over residues 819-832 (DLDNFSDENMEECP) the composition is skewed to acidic residues. The segment covering 842 to 855 (SADASQDSLSSSPL) has biased composition (low complexity). A compositionally biased stretch (polar residues) spans 898-935 (TNDSSSVGGDMESQSAGSPAISESTSSMQALSPSNSTQ). A compositionally biased stretch (basic and acidic residues) spans 936-948 (EFHKSPGMEEKPQ). Phosphoserine is present on S940. Glycyl lysine isopeptide (Lys-Gly) (interchain with G-Cter in SUMO2) cross-links involve residues K946 and K981. C2H2-type zinc fingers lie at residues 1000 to 1022 (TACD…YRSH) and 1028 to 1050 (FICT…MLTH). Residue K1085 forms a Glycyl lysine isopeptide (Lys-Gly) (interchain with G-Cter in SUMO2) linkage. Residues 1094-1119 (VSPQDSKDAPTSHVPQGPLSSSATSP) are disordered. 2 consecutive C2H2-type zinc fingers follow at residues 1133-1155 (HYCN…ERTH) and 1161-1183 (FACT…MGTH). Glycyl lysine isopeptide (Lys-Gly) (interchain with G-Cter in SUMO2) cross-links involve residues K1218, K1297, and K1317.

This sequence belongs to the sal C2H2-type zinc-finger protein family. May associate with NuRD histone deacetylase complex (HDAC). Interacts with components of HDAC complex including HDAC1, HDAC2, RBBP4, RBPP7, MTA1 and MTA2. Interacts with CCNQ. Interacts with NSD2 (via PHD-type zinc fingers 1, 2 and 3). As to expression, expressed in the metanephric mesenchyme surrounding ureteric bud.

The protein localises to the nucleus. Its function is as follows. Transcriptional repressor involved in organogenesis. Plays an essential role in ureteric bud invasion during kidney development. This chain is Sal-like protein 1 (Sall1), found in Mus musculus (Mouse).